An 81-amino-acid polypeptide reads, in one-letter code: Extracellular matrix regulatory protein B (81 aa).

In terms of biological role, regulates the biosynthesis of the extracellular matrix and the biofilm formation. May act as an enhancer of biofilm gene expression. Acts in parallel to the pathway that governs SinR derepression. The polypeptide is Extracellular matrix regulatory protein B (Bacillus subtilis (strain 168)).